Here is a 171-residue protein sequence, read N- to C-terminus: Small ribosomal subunit protein mS25 (171 aa).

The protein belongs to the mitochondrion-specific ribosomal protein mS25 family. In terms of assembly, component of the mitochondrial ribosome small subunit (28S) which comprises a 12S rRNA and about 30 distinct proteins.

The protein resides in the mitochondrion. The polypeptide is Small ribosomal subunit protein mS25 (Mrps25) (Rattus norvegicus (Rat)).